Here is a 227-residue protein sequence, read N- to C-terminus: 2-C-methyl-D-erythritol 4-phosphate cytidylyltransferase (227 aa).

It belongs to the IspD/TarI cytidylyltransferase family. IspD subfamily.

It carries out the reaction 2-C-methyl-D-erythritol 4-phosphate + CTP + H(+) = 4-CDP-2-C-methyl-D-erythritol + diphosphate. It participates in isoprenoid biosynthesis; isopentenyl diphosphate biosynthesis via DXP pathway; isopentenyl diphosphate from 1-deoxy-D-xylulose 5-phosphate: step 2/6. In terms of biological role, catalyzes the formation of 4-diphosphocytidyl-2-C-methyl-D-erythritol from CTP and 2-C-methyl-D-erythritol 4-phosphate (MEP). In Bordetella bronchiseptica (strain ATCC BAA-588 / NCTC 13252 / RB50) (Alcaligenes bronchisepticus), this protein is 2-C-methyl-D-erythritol 4-phosphate cytidylyltransferase.